We begin with the raw amino-acid sequence, 607 residues long: UvrABC system protein C (607 aa).

Residues 16-94 enclose the GIY-YIG domain; that stretch reads GRPGVYRMFD…IKEWRPPYNI (79 aa). A UVR domain is found at 203 to 238; sequence NALTDELSGAMEQAASTLDFERAAELRDQISLLRRV.

The protein belongs to the UvrC family. As to quaternary structure, interacts with UvrB in an incision complex.

The protein localises to the cytoplasm. Functionally, the UvrABC repair system catalyzes the recognition and processing of DNA lesions. UvrC both incises the 5' and 3' sides of the lesion. The N-terminal half is responsible for the 3' incision and the C-terminal half is responsible for the 5' incision. This is UvrABC system protein C from Pseudomonas fluorescens (strain SBW25).